A 216-amino-acid polypeptide reads, in one-letter code: Probable RNA 2'-phosphotransferase 2 (216 aa).

Belongs to the KptA/TPT1 family.

Functionally, removes the 2'-phosphate from RNA via an intermediate in which the phosphate is ADP-ribosylated by NAD followed by a presumed transesterification to release the RNA and generate ADP-ribose 1''-2''-cyclic phosphate (APPR&gt;P). May function as an ADP-ribosylase. In Archaeoglobus fulgidus (strain ATCC 49558 / DSM 4304 / JCM 9628 / NBRC 100126 / VC-16), this protein is Probable RNA 2'-phosphotransferase 2 (kptA2).